The sequence spans 154 residues: Acidic phospholipase A2 2 (154 aa).

Positions 1-19 are cleaved as a signal peptide; sequence MHPAHLLVPLGVCVSLLGA. A propeptide spanning residues 20 to 27 is cleaved from the precursor; sequence ARIPPLPL. 7 cysteine pairs are disulfide-bonded: Cys-38-Cys-104, Cys-54-Cys-153, Cys-56-Cys-72, Cys-71-Cys-132, Cys-78-Cys-125, Cys-88-Cys-118, and Cys-111-Cys-123. Positions 55, 57, and 59 each coordinate Ca(2+). His-75 is a catalytic residue. Asp-76 serves as a coordination point for Ca(2+). Asp-126 is an active-site residue.

Belongs to the phospholipase A2 family. Group I subfamily. D49 sub-subfamily. Monomer. Requires Ca(2+) as cofactor. Expressed by the venom gland.

It localises to the secreted. It catalyses the reaction a 1,2-diacyl-sn-glycero-3-phosphocholine + H2O = a 1-acyl-sn-glycero-3-phosphocholine + a fatty acid + H(+). Its function is as follows. Snake venom phospholipase A2 (PLA2) that shows moderate enzymatic activity and exhibits procoagulant activity. PLA2 catalyzes the calcium-dependent hydrolysis of the 2-acyl groups in 3-sn-phosphoglycerides. This Pseudonaja textilis (Eastern brown snake) protein is Acidic phospholipase A2 2.